We begin with the raw amino-acid sequence, 452 residues long: tRNA modification GTPase MnmE (452 aa).

Arg22, Glu79, and Lys119 together coordinate (6S)-5-formyl-5,6,7,8-tetrahydrofolate. One can recognise a TrmE-type G domain in the interval 215 to 375 (GMKVVIAGRP…LRQHLKQSMG (161 aa)). Asn225 is a K(+) binding site. GTP-binding positions include 225-230 (NAGKSS), 244-250 (TDIAGTT), 269-272 (DTAG), and 333-336 (NKAD). Ser229 lines the Mg(2+) pocket. K(+) contacts are provided by Thr244, Ile246, and Thr249. Thr250 serves as a coordination point for Mg(2+). Residue Lys452 participates in (6S)-5-formyl-5,6,7,8-tetrahydrofolate binding.

The protein belongs to the TRAFAC class TrmE-Era-EngA-EngB-Septin-like GTPase superfamily. TrmE GTPase family. In terms of assembly, homodimer. Heterotetramer of two MnmE and two MnmG subunits. K(+) serves as cofactor.

It is found in the cytoplasm. Exhibits a very high intrinsic GTPase hydrolysis rate. Involved in the addition of a carboxymethylaminomethyl (cmnm) group at the wobble position (U34) of certain tRNAs, forming tRNA-cmnm(5)s(2)U34. This is tRNA modification GTPase MnmE from Histophilus somni (strain 129Pt) (Haemophilus somnus).